The chain runs to 375 residues: Stomatin-2 (375 aa).

The tract at residues 1-75 (MKTQPSEESA…IPVPTGQPRG (75 aa)) is disordered. A compositionally biased stretch (low complexity) spans 11–50 (SPAPVNPGNSGNSGNRRASSTRISFSDQLDGGDSGDSSSN). The helical transmembrane segment at 120-140 (GLGFCGWFLMGLSWIMVISTF) threads the bilayer.

This sequence belongs to the band 7/mec-2 family.

It localises to the membrane. In terms of biological role, may be involved in cilia-related function. In Caenorhabditis elegans, this protein is Stomatin-2 (sto-2).